The chain runs to 1002 residues: Lon protease homolog, mitochondrial (1002 aa).

Residues 102-313 enclose the Lon N-terminal domain; the sequence is VIALPLPHRP…LTLELVKKEM (212 aa). Position 468–475 (468–475) interacts with ATP; the sequence is GPPGVGKT. The Lon proteolytic domain maps to 811-995; it reads QTPVGVVMGL…NEIFDIAFQS (185 aa). Active-site residues include serine 901 and lysine 944.

Belongs to the peptidase S16 family. In terms of assembly, homohexamer or homoheptamer. Organized in a ring with a central cavity.

The protein resides in the mitochondrion matrix. The enzyme catalyses Hydrolysis of proteins in presence of ATP.. ATP-dependent serine protease that mediates the selective degradation of misfolded, unassembled or oxidatively damaged polypeptides as well as certain short-lived regulatory proteins in the mitochondrial matrix. May also have a chaperone function in the assembly of inner membrane protein complexes. Participates in the regulation of mitochondrial gene expression and in the maintenance of the integrity of the mitochondrial genome. Binds to mitochondrial DNA in a site-specific manner. This Oryza sativa subsp. japonica (Rice) protein is Lon protease homolog, mitochondrial.